The primary structure comprises 116 residues: MRHRHGYRKLGRTSAHRKALLKNLAIALIEYGKIEIGVFKAKELQSYIEKLITAARSGDLNAHRYVFAYLQNKSATKKLITEIAPKYASRNGGYTRIQRTRLRRGDASQMAIIELV.

The protein belongs to the bacterial ribosomal protein bL17 family. In terms of assembly, part of the 50S ribosomal subunit. Contacts protein L32.

The chain is Large ribosomal subunit protein bL17 from Helicobacter hepaticus (strain ATCC 51449 / 3B1).